The primary structure comprises 197 residues: Carbohydrate-binding X8 domain-containing protein (197 aa).

An N-terminal signal peptide occupies residues 1 to 19 (MAVLLPLFLLSFMFTYSNA). The segment covering 101–113 (SCLSSSSSNGTPT) has biased composition (low complexity). The disordered stretch occupies residues 101–176 (SCLSSSSSNG…TSGDPNGGEE (76 aa)). Over residues 116-125 (YPSTGNSTTA) the composition is skewed to polar residues. Positions 126–145 (SPGTTNPSTGNSTNSTLPTN) are enriched in low complexity. A compositionally biased stretch (polar residues) spans 146 to 155 (DKPTSSTITF). The segment covering 156–170 (PDSTTMGPSSSTSGD) has biased composition (low complexity). The GPI-anchor amidated asparagine moiety is linked to residue N172. Positions 173-197 (GGEELSVRTTTIILLTTIAAVALRV) are cleaved as a propeptide — removed in mature form.

As to expression, expressed in the sieve elements.

The protein resides in the cell membrane. This is Carbohydrate-binding X8 domain-containing protein from Arabidopsis thaliana (Mouse-ear cress).